Here is a 495-residue protein sequence, read N- to C-terminus: Probable cytosol aminopeptidase (495 aa).

2 residues coordinate Mn(2+): Lys-266 and Asp-271. The active site involves Lys-278. Asp-289, Asp-348, and Glu-350 together coordinate Mn(2+). Residue Arg-352 is part of the active site.

The protein belongs to the peptidase M17 family. Requires Mn(2+) as cofactor.

It is found in the cytoplasm. The catalysed reaction is Release of an N-terminal amino acid, Xaa-|-Yaa-, in which Xaa is preferably Leu, but may be other amino acids including Pro although not Arg or Lys, and Yaa may be Pro. Amino acid amides and methyl esters are also readily hydrolyzed, but rates on arylamides are exceedingly low.. It catalyses the reaction Release of an N-terminal amino acid, preferentially leucine, but not glutamic or aspartic acids.. Its function is as follows. Presumably involved in the processing and regular turnover of intracellular proteins. Catalyzes the removal of unsubstituted N-terminal amino acids from various peptides. The chain is Probable cytosol aminopeptidase from Pseudomonas aeruginosa (strain UCBPP-PA14).